The following is an 81-amino-acid chain: ATP synthase subunit c, chloroplastic (81 aa).

2 helical membrane-spanning segments follow: residues 4–24 (VISA…SIGP) and 57–77 (LAFM…LLFA).

It belongs to the ATPase C chain family. As to quaternary structure, F-type ATPases have 2 components, F(1) - the catalytic core - and F(0) - the membrane proton channel. F(1) has five subunits: alpha(3), beta(3), gamma(1), delta(1), epsilon(1). F(0) has four main subunits: a(1), b(1), b'(1) and c(10-14). The alpha and beta chains form an alternating ring which encloses part of the gamma chain. F(1) is attached to F(0) by a central stalk formed by the gamma and epsilon chains, while a peripheral stalk is formed by the delta, b and b' chains.

It localises to the plastid. Its subcellular location is the chloroplast thylakoid membrane. Functionally, f(1)F(0) ATP synthase produces ATP from ADP in the presence of a proton or sodium gradient. F-type ATPases consist of two structural domains, F(1) containing the extramembraneous catalytic core and F(0) containing the membrane proton channel, linked together by a central stalk and a peripheral stalk. During catalysis, ATP synthesis in the catalytic domain of F(1) is coupled via a rotary mechanism of the central stalk subunits to proton translocation. Its function is as follows. Key component of the F(0) channel; it plays a direct role in translocation across the membrane. A homomeric c-ring of between 10-14 subunits forms the central stalk rotor element with the F(1) delta and epsilon subunits. This is ATP synthase subunit c, chloroplastic from Zygnema circumcarinatum (Green alga).